The sequence spans 204 residues: Histone chaperone ASF1A (204 aa).

Residues 1 to 156 form an interaction with histone H3, CHAF1B, and HIRA region; sequence MAKVQVNNVV…TRFHINWEDN (156 aa). The short motif at 31-37 is the Required for interaction with HIRA element; it reads IEDLSED. The segment at 155-204 is required for interaction with HIRA; that stretch reads DNTEKLEDAESSNPNLPSLLSTDALPSASKGWSTSENSLNVMLESHMDCM. Position 192 is a phosphoserine; by TLK2 (Ser192).

It belongs to the ASF1 family. Interacts with histone H3 (via C-terminus), including histone H3.1, H3.2 and H3.3, and histone H4; the interaction with H3 is direct. Probably interacts with the heterodimeric form of H3-H4 taking the place of the second dimer. Interacts with the CHAF1A, CHAF1B and RBBP4 subunits of the CAF-1 complex. Interacts with CABIN1, HAT1, HIRA, NASP, TAF1 and UBN1. Found in a soluble complex with NASP and histones H3 and H4; the interaction with NASP is probably indirect and mediated by H3-H4. Interacts with CDAN1. Found in a cytosolic complex with IPO4 and histones H3 and H4. Interacts with CREBBP. Phosphorylated by TLK1 and TLK2. Highly phosphorylated in S-phase and at lower levels in M-phase. TLK2-mediated phosphorylation at Ser-192 prevents proteasome-dependent degradation.

The protein localises to the nucleus. Its function is as follows. Histone chaperone that facilitates histone deposition and histone exchange and removal during nucleosome assembly and disassembly. Cooperates with chromatin assembly factor 1 (CAF-1) to promote replication-dependent chromatin assembly and with HIRA to promote replication-independent chromatin assembly. Promotes homologous recombination-mediated repair of double-strand breaks (DSBs) at stalled or collapsed replication forks: acts by mediating histone replacement at DSBs, leading to recruitment of the MMS22L-TONSL complex and subsequent loading of RAD51. Also involved in the nuclear import of the histone H3-H4 dimer together with importin-4 (IPO4): specifically recognizes and binds newly synthesized histones with the monomethylation of H3 'Lys-9' and acetylation at 'Lys-14' (H3K9me1K14ac) marks, and diacetylation at 'Lys-5' and 'Lys-12' of H4 (H4K5K12ac) marks in the cytosol. Required for the formation of senescence-associated heterochromatin foci (SAHF) and efficient senescence-associated cell cycle exit. This Bos taurus (Bovine) protein is Histone chaperone ASF1A (ASF1A).